We begin with the raw amino-acid sequence, 226 residues long: UPF0758 protein M28_Spy0816 (226 aa).

Positions 103–225 (SVLTSVQVAE…YYSFREKSTL (123 aa)) constitute an MPN domain. Zn(2+)-binding residues include His174, His176, and Asp187. The JAMM motif motif lies at 174 to 187 (HNHPSGNIEPSSND).

The protein belongs to the UPF0758 family.

The polypeptide is UPF0758 protein M28_Spy0816 (Streptococcus pyogenes serotype M28 (strain MGAS6180)).